Here is a 384-residue protein sequence, read N- to C-terminus: Glycine-rich cell wall structural protein 1 (384 aa).

The signal sequence occupies residues 1-27 (MGSSQKWVIGLLLFSSIFFELTAITLA).

The protein localises to the secreted. The protein resides in the cell wall. Functionally, responsible for plasticity of the cell wall. The sequence is that of Glycine-rich cell wall structural protein 1 (GRP-1) from Petunia hybrida (Petunia).